A 498-amino-acid polypeptide reads, in one-letter code: Protein nucleotidyltransferase YdiU (498 aa).

8 residues coordinate ATP: G88, G90, R91, K111, D123, G124, R174, and R181. D250 serves as the catalytic Proton acceptor. Mg(2+) contacts are provided by N251 and D260. Residue D260 coordinates ATP.

This sequence belongs to the SELO family. The cofactor is Mg(2+). It depends on Mn(2+) as a cofactor.

The enzyme catalyses L-seryl-[protein] + ATP = 3-O-(5'-adenylyl)-L-seryl-[protein] + diphosphate. It carries out the reaction L-threonyl-[protein] + ATP = 3-O-(5'-adenylyl)-L-threonyl-[protein] + diphosphate. The catalysed reaction is L-tyrosyl-[protein] + ATP = O-(5'-adenylyl)-L-tyrosyl-[protein] + diphosphate. It catalyses the reaction L-histidyl-[protein] + UTP = N(tele)-(5'-uridylyl)-L-histidyl-[protein] + diphosphate. The enzyme catalyses L-seryl-[protein] + UTP = O-(5'-uridylyl)-L-seryl-[protein] + diphosphate. It carries out the reaction L-tyrosyl-[protein] + UTP = O-(5'-uridylyl)-L-tyrosyl-[protein] + diphosphate. Functionally, nucleotidyltransferase involved in the post-translational modification of proteins. It can catalyze the addition of adenosine monophosphate (AMP) or uridine monophosphate (UMP) to a protein, resulting in modifications known as AMPylation and UMPylation. The chain is Protein nucleotidyltransferase YdiU from Methylorubrum populi (strain ATCC BAA-705 / NCIMB 13946 / BJ001) (Methylobacterium populi).